An 831-amino-acid chain; its full sequence is MTVTRRDFVRHQALATAAAAAGVAVPAAATNIVTTAADNKLVWSKAPCRFCGTGCSVNVATKEGRVVATHGDIKSPVNRGLNCVKGYFLSKVMYGEDRLTQPLLRKKNGVYAKDGEFEPVTWEEAFTIMAEKFKKTLKEKGPEGIGMFGSGQWTVWEGYAASKLMKAGFRSNNIDPNARHCMASAVGGFMRTFGIDEPMGCYDDFEHADAFVLWGSNMAEMHPILWTRIADRRLSYPHVQVAVMSTYEHRSFDLADLGVVFTPQSDLAIANFIANYIIQNKKVNWDFVKKHTNFRVGTTDIGYGLRPEHPLQKAAKNADSAGASEPIDFETYAKFVADYTVEKASEISGVSEDKLIKLAKLYADPNIKVMSLWTMGVNQHTRGVWMNNLIYNIHLLTGKISEPGNSPFSLTGQPSACGTAREVGTFSHRLPADMVVTNPKHRAYAEKIWKLPEGSIPEKVGAHAVLQSRKLKDGEINAYWVQVNNNVQAGPNINEEVLPGYRNPQNFIVVSDAYPTVTAQAADLILPSAMWVEKEGAYGNAERRTQFWHQLVNAPGDARSDLWQLVEFSKYFKVEEVWPADLIAKMPEAKGKTLFDILYKNGKVNKFPLAQVSKDYENKEADAFGFYIQKGLFEEYAEFGRGHGHDLADFDRYHEERGLRWPVVNGEETLWRYREGSDPYVEKGKGVQFYGKPDGKAIIFALPYEPPAESPNKEYPFWLCTGRVIEHWHSGSMTQRVPELYKAFPDAVCFMHPEDARSAGLRRGDKVKLQSIRGHIITRIETRGRNKPPKGLVFVPWFDARQLINKVTLDATDPISKQTDFKKCAVKVERV.

Positions 1 to 29 (MTVTRRDFVRHQALATAAAAAGVAVPAAA) form a signal peptide, tat-type signal. One can recognise a 4Fe-4S Mo/W bis-MGD-type domain in the interval 41–97 (LVWSKAPCRFCGTGCSVNVATKEGRVVATHGDIKSPVNRGLNCVKGYFLSKVMYGED). The [4Fe-4S] cluster site is built by cysteine 48, cysteine 51, cysteine 55, and cysteine 83. Mo-bis(molybdopterin guanine dinucleotide) is bound by residues lysine 85, glutamine 152, asparagine 177, cysteine 181, 214-221 (WGSNMAEM), 245-249 (STYEH), 264-266 (QSD), methionine 375, glutamine 379, asparagine 485, 511-512 (SD), lysine 534, aspartate 561, and 721-730 (TGRVIEHWHS). Residue tryptophan 797 participates in substrate binding. Mo-bis(molybdopterin guanine dinucleotide) is bound by residues asparagine 805 and lysine 822.

Belongs to the prokaryotic molybdopterin-containing oxidoreductase family. NasA/NapA/NarB subfamily. In terms of assembly, component of the periplasmic nitrate reductase NapAB complex composed of NapA and NapB. Requires [4Fe-4S] cluster as cofactor. It depends on Mo-bis(molybdopterin guanine dinucleotide) as a cofactor. Post-translationally, predicted to be exported by the Tat system. The position of the signal peptide cleavage has not been experimentally proven.

Its subcellular location is the periplasm. It catalyses the reaction 2 Fe(II)-[cytochrome] + nitrate + 2 H(+) = 2 Fe(III)-[cytochrome] + nitrite + H2O. In terms of biological role, catalytic subunit of the periplasmic nitrate reductase complex NapAB. Receives electrons from NapB and catalyzes the reduction of nitrate to nitrite. This is Periplasmic nitrate reductase from Saccharophagus degradans (strain 2-40 / ATCC 43961 / DSM 17024).